Here is a 396-residue protein sequence, read N- to C-terminus: Tryptophan synthase beta chain (396 aa).

Residue Lys-86 is modified to N6-(pyridoxal phosphate)lysine.

This sequence belongs to the TrpB family. In terms of assembly, tetramer of two alpha and two beta chains. Pyridoxal 5'-phosphate is required as a cofactor.

It catalyses the reaction (1S,2R)-1-C-(indol-3-yl)glycerol 3-phosphate + L-serine = D-glyceraldehyde 3-phosphate + L-tryptophan + H2O. The protein operates within amino-acid biosynthesis; L-tryptophan biosynthesis; L-tryptophan from chorismate: step 5/5. Functionally, the beta subunit is responsible for the synthesis of L-tryptophan from indole and L-serine. The protein is Tryptophan synthase beta chain of Vibrio campbellii (strain ATCC BAA-1116).